Consider the following 508-residue polypeptide: UTP--glucose-1-phosphate uridylyltransferase (508 aa).

At Ser13 the chain carries Phosphoserine. Residues Leu113–Gly116, Lys127, Gln190, and Gly222 contribute to the UTP site. A substrate-binding site is contributed by Gly115–Gly116. Residue Lys127 coordinates Mg(2+). Substrate-binding positions include His223 and Asn251–Asp253. UTP is bound by residues Asp253 and Lys396. Mg(2+) is bound at residue Asp253. Lys396 is an active-site residue. Thr426 carries the phosphothreonine modification. Ser434 carries the phosphoserine modification. Residue Lys438 is modified to N6-acetyllysine. Ser448 and Ser461 each carry phosphoserine. The tract at residues His457–His508 is oligomerization. The segment at Asn502–Leu503 is critical for end-to-end subunit interaction.

The protein belongs to the UDPGP type 1 family. Homooctamer.

The protein resides in the cytoplasm. It carries out the reaction alpha-D-glucose 1-phosphate + UTP + H(+) = UDP-alpha-D-glucose + diphosphate. It functions in the pathway glycan biosynthesis; glycogen biosynthesis. Its function is as follows. UTP--glucose-1-phosphate uridylyltransferase catalyzing the conversion of glucose-1-phosphate into UDP-glucose, a crucial precursor for the production of glycogen. The protein is UTP--glucose-1-phosphate uridylyltransferase (UGP2) of Cricetulus griseus (Chinese hamster).